Reading from the N-terminus, the 248-residue chain is 4-hydroxy-tetrahydrodipicolinate reductase (248 aa).

Residues 9–14 (GARGKV), 77–79 (GTT), and 104–107 (APNF) each bind NAD(+). His134 functions as the Proton donor/acceptor in the catalytic mechanism. His135 serves as a coordination point for (S)-2,3,4,5-tetrahydrodipicolinate. Residue Lys138 is the Proton donor of the active site. A (S)-2,3,4,5-tetrahydrodipicolinate-binding site is contributed by 144–145 (GT).

It belongs to the DapB family.

The protein resides in the cytoplasm. The enzyme catalyses (S)-2,3,4,5-tetrahydrodipicolinate + NAD(+) + H2O = (2S,4S)-4-hydroxy-2,3,4,5-tetrahydrodipicolinate + NADH + H(+). The catalysed reaction is (S)-2,3,4,5-tetrahydrodipicolinate + NADP(+) + H2O = (2S,4S)-4-hydroxy-2,3,4,5-tetrahydrodipicolinate + NADPH + H(+). Its pathway is amino-acid biosynthesis; L-lysine biosynthesis via DAP pathway; (S)-tetrahydrodipicolinate from L-aspartate: step 4/4. Functionally, catalyzes the conversion of 4-hydroxy-tetrahydrodipicolinate (HTPA) to tetrahydrodipicolinate. This Nocardia farcinica (strain IFM 10152) protein is 4-hydroxy-tetrahydrodipicolinate reductase.